A 336-amino-acid chain; its full sequence is F420-dependent glucose-6-phosphate dehydrogenase (336 aa).

Coenzyme F420-(gamma-Glu)n is bound at residue D39. H40 serves as the catalytic Proton donor. Coenzyme F420-(gamma-Glu)n-binding positions include T76 and 107 to 108 (TG). E109 acts as the Proton acceptor in catalysis. Residues N112, 177–178 (GG), and 180–181 (LV) each bind coenzyme F420-(gamma-Glu)n. The substrate site is built by T195, K198, K259, and R283.

The protein belongs to the F420-dependent glucose-6-phosphate dehydrogenase family. Homodimer.

It catalyses the reaction oxidized coenzyme F420-(gamma-L-Glu)(n) + D-glucose 6-phosphate + H(+) = 6-phospho-D-glucono-1,5-lactone + reduced coenzyme F420-(gamma-L-Glu)(n). Its function is as follows. Catalyzes the coenzyme F420-dependent oxidation of glucose 6-phosphate (G6P) to 6-phosphogluconolactone. This chain is F420-dependent glucose-6-phosphate dehydrogenase, found in Nocardia farcinica (strain IFM 10152).